Reading from the N-terminus, the 318-residue chain is 3'-5' exoribonuclease YhaM (318 aa).

The region spanning 163 to 279 is the HD domain; it reads HVVSMLDLAK…LHYIDNLDAK (117 aa).

This sequence belongs to the YhaM family.

Functionally, shows a 3'-5' exoribonuclease activity. In Bacillus cytotoxicus (strain DSM 22905 / CIP 110041 / 391-98 / NVH 391-98), this protein is 3'-5' exoribonuclease YhaM.